Consider the following 216-residue polypeptide: TATA-box-binding protein-like 1 (216 aa).

2 tandem repeats follow at residues 38–121 (KPVI…QRLG) and 126–210 (FNHF…ILLQ).

This sequence belongs to the TBP family.

It localises to the nucleus. In terms of biological role, TATA box-binding transcription factor. Members of the TBP family are differentially required to regulate transcription and development during early embryogenesis. The polypeptide is TATA-box-binding protein-like 1 (trf1) (Entamoeba histolytica (strain ATCC 30459 / HM-1:IMSS / ABRM)).